A 238-amino-acid chain; its full sequence is tRNA (guanine-N(7)-)-methyltransferase (238 aa).

Positions 68, 93, 120, and 143 each coordinate S-adenosyl-L-methionine. Asp143 is a catalytic residue. Substrate is bound by residues Lys147, Asp179, and 216–219 (TKFE).

This sequence belongs to the class I-like SAM-binding methyltransferase superfamily. TrmB family. As to quaternary structure, monomer.

The catalysed reaction is guanosine(46) in tRNA + S-adenosyl-L-methionine = N(7)-methylguanosine(46) in tRNA + S-adenosyl-L-homocysteine. It functions in the pathway tRNA modification; N(7)-methylguanine-tRNA biosynthesis. In terms of biological role, catalyzes the formation of N(7)-methylguanine at position 46 (m7G46) in tRNA. This is tRNA (guanine-N(7)-)-methyltransferase from Edwardsiella ictaluri (strain 93-146).